The primary structure comprises 664 residues: MSYLQPPLFTTVSSDWVAPDLSTLPSWEGAKRVAIDCETRDPDLRKLGPGAGRRPNSYITGISFAIEDGPGGYLPIRHEGGGNLPLEGVLAYLRAQAKVFTGDLVGANLPYDLDFLAGDGIEFERVRYFRDIQIADPLICELHDSYSMQAIAERWGFHGKDEALLRAAAVDYGIDPKKDMWMLPAKFVGKYAEEDTRLPLNILRRQEREIDEQDLWGVYNLESKLLPILTGLRRRGVRIDCDRLDMIERWALEKETEALAQVRSITGHRIAVGDVWKPEVIAPALEHIGIKLNKTSQGKPNIDKELLGSIDHPVADLLERARKVNKLRTTFASSVRDHMVNGRLHGTFNQLRRQKDDESDGTAGAAYGRLSSEHPNLQQQPARDEFAMMWRAIYLPEEGQHWASNDYSQQEPRMAVHYACLAKDLIGHQAWLSAIEARDKYRNDPNTDNHQMMADMAGIKRKDAKEIYLGLSYGMGGAKMCRKLGLPTMMAVRGPRFQLFDVNSPEGQRLVAEGARRFEAAGPEGQALLDTFDHKVPFIKKLAKACEARAKAVGYITTLSGRRCRFPKDKDGNYDWTHKGLNRLIQGSSADQTKMAMVACAEAGLDIIIQVHDEIAFSVHDMKEAAEAAHIMRTCTPLELPSKVDVEIGQSWGHSMGWDGNPPS.

The segment at 352-378 (RRQKDDESDGTAGAAYGRLSSEHPNLQ) is disordered.

This sequence belongs to the DNA polymerase type-A family. DpoZ subfamily.

It catalyses the reaction DNA(n) + a 2'-deoxyribonucleoside 5'-triphosphate = DNA(n+1) + diphosphate. Functionally, DNA polymerase that replicates the viral genomic DNA. Also incorporates 5-hydroxymethyl-2'-deoxyuridine (5-hmdU) instead of dTMP into DNA during replication, as an early step in the pathway of thymidine hypermodifications of the viral genome. As a final result of the pathway of hypermodification, 5-aminoethyl-2'-deoxyuridine (5-NedU) substitutes for about 30% of thymidines in the viral DNA. These modifications probably prevent degradation of viral genome by the host restriction-modification antiviral defense system. The sequence is that of DNA-directed DNA polymerase (gp62) from Pseudomonas phage M6.